Reading from the N-terminus, the 477-residue chain is Myc-associated zinc finger protein (477 aa).

2 disordered regions span residues 59 to 78 (AQSP…APAA) and 121 to 146 (TVDT…PAAE). Over residues 130–141 (PPAPPPPPPPVS) the composition is skewed to pro residues. C2H2-type zinc fingers lie at residues 190–212 (YICA…EAIH), 279–301 (HACE…KLSH), 307–329 (YQCP…VRSH), and 337–360 (YNCS…RQVH). Residue Ser361 is modified to Phosphoserine. The segment at 366 to 388 (FKCEKCEAAFATKDRLRAHTVRH) adopts a C2H2-type 5 zinc-finger fold. The segment at 392-413 (VPCHVCGKMLSSAYISDHMKVH) adopts a C2H2-type 6; atypical zinc-finger fold.

Interacts with BPTF. As to quaternary structure, forms a heterodimer with MAZ isoform 2; the interaction inhibits MAZ isoform 1-mediated transcription activation. In terms of assembly, forms a heterodimer with MAZ isoform 1; the interaction inhibits MAZ isoform 1-mediated transcription activation. In terms of tissue distribution, present in kidney, liver and brain. In the brain, highest levels are found in motor cortex and midfrontal cortex (at protein level). Expressed in the heart, brain, placenta, lung, liver, skeletal muscle and weakly expressed in the kidney. Expressed in the joint synovium.

Its subcellular location is the nucleus. Transcriptional regulator, potentially with dual roles in transcription initiation and termination. Its function is as follows. Binds DNA and functions as a transcriptional activator. Binds to two G/A-rich sites, ME1a1 and ME1a2, within the MYC promoter having greater affinity for the former. Also binds to multiple G/C-rich sites within the promoter of the Sp1 family of transcription factors. In terms of biological role, binds DNA and functions as a transcriptional activator. Inhibits MAZ isoform 1-mediated transcription. Functionally, binds DNA and functions as a transcriptional activator. This chain is Myc-associated zinc finger protein (MAZ), found in Homo sapiens (Human).